Consider the following 492-residue polypeptide: Cytochrome P450 2A2 (492 aa).

C437 contributes to the heme binding site.

This sequence belongs to the cytochrome P450 family. It depends on heme as a cofactor. In terms of tissue distribution, liver specific.

It is found in the endoplasmic reticulum membrane. The protein resides in the microsome membrane. It carries out the reaction an organic molecule + reduced [NADPH--hemoprotein reductase] + O2 = an alcohol + oxidized [NADPH--hemoprotein reductase] + H2O + H(+). In terms of biological role, highly active in the 15-alpha-hydroxylation of testosterone. The polypeptide is Cytochrome P450 2A2 (Cyp2a2) (Rattus norvegicus (Rat)).